The sequence spans 124 residues: Snake venom vascular endothelial growth factor toxin apiscin (124 aa).

Positions 1-24 (MAAYLLAVAILFCIQGWPSGTVQG) are cleaved as a signal peptide. Glutamine 25 bears the Pyrrolidone carboxylic acid mark. 3 disulfide bridges follow: cysteine 38–cysteine 80, cysteine 69–cysteine 115, and cysteine 73–cysteine 117.

Belongs to the PDGF/VEGF growth factor family. Snake venom VEGF subfamily. As to quaternary structure, homodimer; disulfide-linked. Interacts with VEGF receptor-1 (FLT1) with a high affinity, whereas it binds to VEGF receptor-2 (KDR) with a low affinity. Does not bind VEGF receptor-3 (FLT4). Expressed by the venom gland.

The protein localises to the secreted. Its function is as follows. Snake venom VEGFs that may contribute to venom dispersion and prey subjugation by inducing vascular permeability and hypotension. This protein induces an increase in capillary permeability after intradermal injection, as well as a drastic hypotensive effect after intravenous injection. The hypotension is mediated by nitric oxide (NO), which is produced by VEGF-activated endothelium NO synthase. Also induces angiogenesis in vitro. Like other crotalid VEGFs, this protein interacts with VEGF receptor-1 (FLT1) with a high affinity, whereas it binds to VEGF receptor-2 (KDR) with a low affinity. This chain is Snake venom vascular endothelial growth factor toxin apiscin, found in Agkistrodon piscivorus piscivorus (Eastern cottonmouth).